A 463-amino-acid polypeptide reads, in one-letter code: Chromosomal replication initiator protein DnaA (463 aa).

A domain I, interacts with DnaA modulators region spans residues 1 to 84; the sequence is MNTNQIILTN…QLFQHYNNAI (84 aa). The domain II stretch occupies residues 84–124; sequence IKTVEIITKELPASNQATLELPTKTFADIGSSELNSENIFS. The segment at 125–343 is domain III, AAA+ region; the sequence is TFDIRFTFDN…GALNKVIAHS (219 aa). G171, G173, K174, and T175 together coordinate ATP. Residues 344–463 form a domain IV, binds dsDNA region; it reads NFTAKEITLE…INLMMKILQN (120 aa).

Belongs to the DnaA family. In terms of assembly, oligomerizes as a right-handed, spiral filament on DNA at oriC.

It is found in the cytoplasm. Functionally, plays an essential role in the initiation and regulation of chromosomal replication. ATP-DnaA binds to the origin of replication (oriC) to initiate formation of the DNA replication initiation complex once per cell cycle. Binds the DnaA box (a 9 base pair repeat at the origin) and separates the double-stranded (ds)DNA. Forms a right-handed helical filament on oriC DNA; dsDNA binds to the exterior of the filament while single-stranded (ss)DNA is stabiized in the filament's interior. The ATP-DnaA-oriC complex binds and stabilizes one strand of the AT-rich DNA unwinding element (DUE), permitting loading of DNA polymerase. After initiation quickly degrades to an ADP-DnaA complex that is not apt for DNA replication. Binds acidic phospholipids. The polypeptide is Chromosomal replication initiator protein DnaA (Rickettsia bellii (strain RML369-C)).